The primary structure comprises 133 residues: MPPKTRGAVRKPRKKDKKNIALGQAHIKSTFNNTIVSITDPTGAVISWASSGEVGFKGSRKSTPFAAQMAAEAAAKRAQEHGMRKVDVFVKGPGSGRETAIRSLQAAGLEVGSIQDVTPAAHNGCRPPKRRRV.

Positions 1-23 are disordered; sequence MPPKTRGAVRKPRKKDKKNIALG. A compositionally biased stretch (basic residues) spans 7–17; it reads GAVRKPRKKDK.

It belongs to the universal ribosomal protein uS11 family. As to quaternary structure, part of the 30S ribosomal subunit. Interacts with proteins S7 and S18. Binds to IF-3.

Located on the platform of the 30S subunit, it bridges several disparate RNA helices of the 16S rRNA. Forms part of the Shine-Dalgarno cleft in the 70S ribosome. The protein is Small ribosomal subunit protein uS11 of Pseudarthrobacter chlorophenolicus (strain ATCC 700700 / DSM 12829 / CIP 107037 / JCM 12360 / KCTC 9906 / NCIMB 13794 / A6) (Arthrobacter chlorophenolicus).